The primary structure comprises 585 residues: BURP domain-containing protein 17 (585 aa).

Positions 1–20 are cleaved as a signal peptide; it reads MDRIFARFFCFLLIAAVSHA. Positions 63 to 82 are disordered; it reads GQRNYKSSVSHVAERSHRVD. In terms of domain architecture, BURP spans 363 to 584; it reads FFLEKNLQQG…QPDAVVWTRR (222 aa).

As to expression, expressed in leaves.

This Oryza sativa subsp. japonica (Rice) protein is BURP domain-containing protein 17 (BURP17).